A 70-amino-acid chain; its full sequence is Large ribosomal subunit protein bL28 (70 aa).

Residues 1 to 26 (MAKRCEVCGKAPRSGNTVSHSDKKSG) form a disordered region.

This sequence belongs to the bacterial ribosomal protein bL28 family.

This Thermotoga maritima (strain ATCC 43589 / DSM 3109 / JCM 10099 / NBRC 100826 / MSB8) protein is Large ribosomal subunit protein bL28 (rpmB).